We begin with the raw amino-acid sequence, 152 residues long: UPF0225 protein YchJ (152 aa).

The protein belongs to the UPF0225 family.

This Shigella dysenteriae serotype 1 (strain Sd197) protein is UPF0225 protein YchJ.